A 453-amino-acid polypeptide reads, in one-letter code: Membrane-bound acylglycerophosphatidylinositol O-acyltransferase mboa-7 (453 aa).

7 helical membrane-spanning segments follow: residues 4–24 (ILGL…FSFG), 36–56 (ILAS…PKIV), 79–99 (LYVF…HYIL), 154–174 (AYFY…QMLI), 195–215 (VRLL…PLDI), 220–240 (AIWE…FVVF), and 244–264 (VYSA…GIYP). Asparagine 319 carries N-linked (GlcNAc...) asparagine glycosylation. The active site involves histidine 350. Transmembrane regions (helical) follow at residues 354-374 (AGYF…DVIF) and 421-441 (FWSS…IYSA).

It belongs to the membrane-bound acyltransferase family. As to expression, expressed ubiquitously throughout development from early embryo to larval and adult stages. In adults, strongly expressed in pharyngeal muscle, body wall muscle, vulval cells, distal tip cells, intestinal cells and spermatheca.

The protein resides in the membrane. It catalyses the reaction 1-octadecanoyl-sn-glycero-3-phospho-(1D-myo-inositol) + (5Z,8Z,11Z,14Z,17Z)-eicosapentaenoyl-CoA = 1-octadecanoyl-2-(5Z,8Z,11Z,14Z,17Z-eicosapentaenoyl)-sn-glycero-3-phospho-(1D-myo-inositol) + CoA. It carries out the reaction a 1-acyl-sn-glycero-3-phospho-(1D-myo-inositol) + (5Z,8Z,11Z,14Z,17Z)-eicosapentaenoyl-CoA = a 1-acyl-2-(5Z,8Z,11Z,14Z,17Z-eicosapentaenoyl)-sn-glycero-3-phospho-(1D-myo-inositol) + CoA. The catalysed reaction is a 1-acyl-sn-glycero-3-phospho-(1D-myo-inositol) + (5Z,8Z,11Z,14Z)-eicosatetraenoyl-CoA = a 1-acyl-2-(5Z,8Z,11Z,14Z-eicosatetraenoyl)-sn-glycero-3-phospho-(1D-myo-inositol) + CoA. It functions in the pathway lipid metabolism; phospholipid metabolism. In terms of biological role, acyltransferase which mediates the conversion of lysophosphatidylinositol (1-acyl-sn-glycero-3-phosphatidylinositol or LPI) into phosphatidylinositol (1,2-diacyl-sn-glycero-3-phosphoinositol or PI) (LPIAT activity). Prefers sn-2-LPI rather than sn-1-LPI as the acyl acceptor. Lysophospholipid acyltransferases (LPLATs) catalyze the reacylation step of the phospholipid remodeling pathway also known as the Lands cycle. Involved in the selective incorporation of arachidonoyl-CoA ((5Z,8Z,11Z,14Z)-eicosatetraenoyl-CoA) and (5Z,8Z,11Z,14Z,17Z)-eicosapentaenoyl-CoA (EPA-CoA) into PI. Besides its role in biomembranes, PI is a precursor of PI 3-phosphate (PIP3) and its fatty acid composition has an important role in PI3P signaling. In Caenorhabditis elegans, this protein is Membrane-bound acylglycerophosphatidylinositol O-acyltransferase mboa-7.